We begin with the raw amino-acid sequence, 262 residues long: Methanethiol S-methyltransferase (262 aa).

5 consecutive transmembrane segments (helical) span residues 22–42 (LYSLLSYLFFLMTLLYLIGFV), 55–75 (PGASWPLALLVDVLLITLFAV), 100–120 (ATYVLASSVVLVVMFWLWQPI), 134–154 (AVLTTLFWLGWGLILVATFLI), and 195–215 (GFLMAFWATPEMTVGHLVFAL).

This sequence belongs to the nurim family.

It is found in the membrane. The enzyme catalyses methanethiol + S-adenosyl-L-methionine = dimethyl sulfide + S-adenosyl-L-homocysteine + H(+). Functionally, catalyzes the methylation of methanethiol (MeSH) to yield dimethylsulphide (DMS). This is Methanethiol S-methyltransferase from Pseudomonas deceptionensis.